Reading from the N-terminus, the 588-residue chain is Transcription factor 7-like 1 (588 aa).

A compositionally biased stretch (gly residues) spans 1–31 (MPQLGGGGGGGGGGSGGGGGSSAGAAGGGDD). The CTNNB1-binding stretch occupies residues 1–74 (MPQLGGGGGG…VKSSLVNESE (74 aa)). 3 disordered regions span residues 1 to 101 (MPQL…PRDY), 203 to 234 (SPGSPPTHLSPEIDPKTGIPRPPHPSELSPYY), and 409 to 506 (LYPT…LSLT). The segment covering 67–81 (SSLVNESENQSSSSD) has biased composition (low complexity). The span at 83–101 (EAERRPQPVRDTFQKPRDY) shows a compositional bias: basic and acidic residues. The HMG box DNA-binding region spans 346–414 (VKKPLNAFML…LHSQLYPTWS (69 aa)). The Nuclear localization signal motif lies at 421–427 (KKKKRKR). Low complexity-rich tracts occupy residues 431–441 (LSQTQSQQQVQ) and 478–497 (SPATPSAALASPAAPAATHS).

Belongs to the TCF/LEF family. In terms of assembly, binds the armadillo repeat of CTNNB1 and forms a stable complex. Interacts with DAZAP2. As to expression, detected in hair follicles and skin keratinocytes, and at lower levels in stomach epithelium.

It localises to the nucleus. Participates in the Wnt signaling pathway. Binds to DNA and acts as a repressor in the absence of CTNNB1, and as an activator in its presence. Necessary for the terminal differentiation of epidermal cells, the formation of keratohyalin granules and the development of the barrier function of the epidermis. Down-regulates NQO1, leading to increased mitomycin c resistance. The chain is Transcription factor 7-like 1 (TCF7L1) from Homo sapiens (Human).